A 335-amino-acid chain; its full sequence is tRNA N6-adenosine threonylcarbamoyltransferase (335 aa).

A divalent metal cation is bound by residues histidine 109, histidine 113, and tyrosine 130. Residues 130-134 (YVSGG), aspartate 162, glycine 177, glutamate 181, and asparagine 266 contribute to the substrate site. Position 294 (aspartate 294) interacts with a divalent metal cation.

Belongs to the KAE1 / TsaD family. In terms of assembly, component of the EKC/KEOPS complex composed of at least tp53rk, tprkb, osgep and lage3; the whole complex dimerizes. The cofactor is a divalent metal cation.

The protein localises to the cytoplasm. Its subcellular location is the nucleus. It carries out the reaction L-threonylcarbamoyladenylate + adenosine(37) in tRNA = N(6)-L-threonylcarbamoyladenosine(37) in tRNA + AMP + H(+). Component of the EKC/KEOPS complex that is required for the formation of a threonylcarbamoyl group on adenosine at position 37 (t(6)A37) in tRNAs that read codons beginning with adenine. The complex is probably involved in the transfer of the threonylcarbamoyl moiety of threonylcarbamoyl-AMP (TC-AMP) to the N6 group of A37. OSGEP likely plays a direct catalytic role in this reaction, but requires other protein(s) of the complex to fulfill this activity. This Danio rerio (Zebrafish) protein is tRNA N6-adenosine threonylcarbamoyltransferase.